We begin with the raw amino-acid sequence, 263 residues long: Endonuclease 8 (263 aa).

Proline 2 serves as the catalytic Schiff-base intermediate with DNA. The active-site Proton donor is the glutamate 3. Catalysis depends on lysine 53, which acts as the Proton donor; for beta-elimination activity. 3 residues coordinate DNA: glutamine 70, arginine 125, and asparagine 169. The segment at 229–263 (KVFHRDGEPCERCGSIIEKTTLSSRPFYWCPGCQH) adopts an FPG-type zinc-finger fold. Residue arginine 253 is the Proton donor; for delta-elimination activity of the active site.

Belongs to the FPG family. The cofactor is Zn(2+).

It catalyses the reaction 2'-deoxyribonucleotide-(2'-deoxyribose 5'-phosphate)-2'-deoxyribonucleotide-DNA = a 3'-end 2'-deoxyribonucleotide-(2,3-dehydro-2,3-deoxyribose 5'-phosphate)-DNA + a 5'-end 5'-phospho-2'-deoxyribonucleoside-DNA + H(+). Functionally, involved in base excision repair of DNA damaged by oxidation or by mutagenic agents. Acts as a DNA glycosylase that recognizes and removes damaged bases. Has a preference for oxidized pyrimidines, such as thymine glycol, 5,6-dihydrouracil and 5,6-dihydrothymine. Has AP (apurinic/apyrimidinic) lyase activity and introduces nicks in the DNA strand. Cleaves the DNA backbone by beta-delta elimination to generate a single-strand break at the site of the removed base with both 3'- and 5'-phosphates. This chain is Endonuclease 8, found in Escherichia coli (strain K12 / MC4100 / BW2952).